The following is a 55-amino-acid chain: Mannose/glucose-specific lectin alpha chain (55 aa).

The protein belongs to the leguminous lectin family. In terms of assembly, tetramer of two alpha and two beta chains.

This is Mannose/glucose-specific lectin alpha chain from Lathyrus sativus (White vetchling).